A 313-amino-acid chain; its full sequence is Porphobilinogen deaminase (313 aa).

Position 242 is an S-(dipyrrolylmethanemethyl)cysteine (cysteine 242).

The protein belongs to the HMBS family. Monomer. Requires dipyrromethane as cofactor.

The enzyme catalyses 4 porphobilinogen + H2O = hydroxymethylbilane + 4 NH4(+). It participates in porphyrin-containing compound metabolism; protoporphyrin-IX biosynthesis; coproporphyrinogen-III from 5-aminolevulinate: step 2/4. Functionally, tetrapolymerization of the monopyrrole PBG into the hydroxymethylbilane pre-uroporphyrinogen in several discrete steps. This is Porphobilinogen deaminase from Pseudomonas putida (strain W619).